We begin with the raw amino-acid sequence, 451 residues long: Glucose-6-phosphate isomerase (451 aa).

The active-site Proton donor is Glu291. Catalysis depends on residues His312 and Lys426.

The protein belongs to the GPI family.

The protein localises to the cytoplasm. The enzyme catalyses alpha-D-glucose 6-phosphate = beta-D-fructose 6-phosphate. Its pathway is carbohydrate biosynthesis; gluconeogenesis. It functions in the pathway carbohydrate degradation; glycolysis; D-glyceraldehyde 3-phosphate and glycerone phosphate from D-glucose: step 2/4. Functionally, catalyzes the reversible isomerization of glucose-6-phosphate to fructose-6-phosphate. The protein is Glucose-6-phosphate isomerase of Thermoanaerobacter sp. (strain X514).